Here is a 236-residue protein sequence, read N- to C-terminus: MVSMTTSSSSYGTFSTVVNSSRPNSSATFLVPSLKFSTGISNFANLSNGFSLKSPINPGFLFKSRPFTVQARAAAEKTVHDFTVKDIDGKDVALNKFKGKVMLIVNVASRCGLTSSNYSELSHLYEKYKTQGFEILAFPCNQFGFQEPGSNSEIKQFACTRFKAEFPIFDKVDVNGPSTAPIYEFLKSNAGGFLGGLIKWNFEKFLIDKKGKVVERYPPTTSPFQIEKDIQKLLAA.

Low complexity predominate over residues 1-16 (MVSMTTSSSSYGTFST). The interval 1–24 (MVSMTTSSSSYGTFSTVVNSSRPN) is disordered. The N-terminal 64 residues, 1-64 (MVSMTTSSSS…PINPGFLFKS (64 aa)), are a transit peptide targeting the chloroplast. Cys111 is an active-site residue.

Belongs to the glutathione peroxidase family. As to expression, expressed in leaves, stems, flowers, green siliques and seeds.

The protein localises to the plastid. Its subcellular location is the chloroplast. It catalyses the reaction a hydroperoxy polyunsaturated fatty acid + 2 glutathione = a hydroxy polyunsaturated fatty acid + glutathione disulfide + H2O. Protects cells and enzymes from oxidative damage, by catalyzing the reduction of hydrogen peroxide, lipid peroxides and organic hydroperoxide, by glutathione. This Arabidopsis thaliana (Mouse-ear cress) protein is Phospholipid hydroperoxide glutathione peroxidase 1, chloroplastic (GPX1).